The sequence spans 623 residues: Aspartate--tRNA(Asp/Asn) ligase (623 aa).

Glu175 provides a ligand contact to L-aspartate. The tract at residues 199–202 (QQFK) is aspartate. L-aspartate-binding residues include Arg221 and His455. 221 to 223 (RDE) contacts ATP. Glu517 serves as a coordination point for ATP. Arg524 serves as a coordination point for L-aspartate. 569 to 572 (GVDR) is a binding site for ATP.

Belongs to the class-II aminoacyl-tRNA synthetase family. Type 1 subfamily. As to quaternary structure, homodimer.

The protein resides in the cytoplasm. The enzyme catalyses tRNA(Asx) + L-aspartate + ATP = L-aspartyl-tRNA(Asx) + AMP + diphosphate. Aspartyl-tRNA synthetase with relaxed tRNA specificity since it is able to aspartylate not only its cognate tRNA(Asp) but also tRNA(Asn). Reaction proceeds in two steps: L-aspartate is first activated by ATP to form Asp-AMP and then transferred to the acceptor end of tRNA(Asp/Asn). The polypeptide is Aspartate--tRNA(Asp/Asn) ligase (Methylocella silvestris (strain DSM 15510 / CIP 108128 / LMG 27833 / NCIMB 13906 / BL2)).